Consider the following 423-residue polypeptide: Histidine--tRNA ligase (423 aa).

It belongs to the class-II aminoacyl-tRNA synthetase family. Homodimer.

It localises to the cytoplasm. It carries out the reaction tRNA(His) + L-histidine + ATP = L-histidyl-tRNA(His) + AMP + diphosphate + H(+). In Corynebacterium diphtheriae (strain ATCC 700971 / NCTC 13129 / Biotype gravis), this protein is Histidine--tRNA ligase.